The sequence spans 569 residues: Peroxynitrite isomerase THAP4 (569 aa).

The segment at 1–85 (MVICCAAVNC…LKPTAVPSIF (85 aa)) adopts a THAP-type zinc-finger fold. The interval 88-216 (SEKKRGAGGH…DKSGISMDDF (129 aa)) is disordered. Composition is skewed to polar residues over residues 121 to 130 (IGSSLSSSDN) and 157 to 167 (AVSQEQGQSLE). Phosphoserine is present on Ser159. The HCFC1-binding motif (HBM) motif lies at 230–233 (LHSY). Position 234 is a phosphoserine (Ser234). A disordered region spans residues 235–312 (FSSKHTRERP…EAVQSEHSDA (78 aa)). The span at 242–262 (ERPSVPREPMDRKRLKREMEP) shows a compositional bias: basic and acidic residues. The span at 265–279 (SGNSVAQSPPSSSLT) shows a compositional bias: polar residues. Positions 280-289 (ATPQKASQSP) are enriched in low complexity. Residues 407–569 (PPKLNPVVEP…LHITYKKVTP (163 aa)) are nitrobindin. Heme b-binding residues include Thr436 and His559.

The protein in the C-terminal section; belongs to the nitrobindin family. Homodimer. The cofactor is heme b.

It is found in the cytoplasm. Its subcellular location is the nucleus. It catalyses the reaction peroxynitrite = nitrate. It functions in the pathway nitrogen metabolism. Its function is as follows. Heme-binding protein able to scavenge peroxynitrite and to protect free L-tyrosine against peroxynitrite-mediated nitration, by acting as a peroxynitrite isomerase that converts peroxynitrite to nitrate. Therefore, this protein likely plays a role in peroxynitrite sensing and in the detoxification of reactive nitrogen and oxygen species (RNS and ROS, respectively). Is able to bind nitric oxide (NO) in vitro, but may act as a sensor of peroxynitrite levels in vivo, possibly modulating the transcriptional activity residing in the N-terminal region. The sequence is that of Peroxynitrite isomerase THAP4 from Mus musculus (Mouse).